A 284-amino-acid polypeptide reads, in one-letter code: D-tagatose-1,6-bisphosphate aldolase subunit GatY (284 aa).

The Proton donor role is filled by aspartate 82. Residues histidine 83 and histidine 180 each coordinate Zn(2+). Cysteine 181 is a binding site for dihydroxyacetone phosphate. Histidine 208 serves as a coordination point for Zn(2+). Dihydroxyacetone phosphate is bound by residues 209–211 and 230–233; these read GAS and NVAT.

The protein belongs to the class II fructose-bisphosphate aldolase family. TagBP aldolase GatY subfamily. In terms of assembly, forms a complex with GatZ. Requires Zn(2+) as cofactor.

It catalyses the reaction D-tagatofuranose 1,6-bisphosphate = D-glyceraldehyde 3-phosphate + dihydroxyacetone phosphate. It functions in the pathway carbohydrate metabolism; D-tagatose 6-phosphate degradation; D-glyceraldehyde 3-phosphate and glycerone phosphate from D-tagatose 6-phosphate: step 2/2. Its function is as follows. Catalytic subunit of the tagatose-1,6-bisphosphate aldolase GatYZ, which catalyzes the reversible aldol condensation of dihydroxyacetone phosphate (DHAP or glycerone-phosphate) with glyceraldehyde 3-phosphate (G3P) to produce tagatose 1,6-bisphosphate (TBP). Requires GatZ subunit for full activity and stability. Is involved in the catabolism of galactitol. In Salmonella paratyphi A (strain ATCC 9150 / SARB42), this protein is D-tagatose-1,6-bisphosphate aldolase subunit GatY.